We begin with the raw amino-acid sequence, 192 residues long: Small ribosomal subunit protein uS5 (192 aa).

An S5 DRBM domain is found at 22 to 85; the sequence is LVDKLVTINR…DRAKRAMIRV (64 aa).

This sequence belongs to the universal ribosomal protein uS5 family. In terms of assembly, part of the 30S ribosomal subunit. Contacts proteins S4 and S8.

In terms of biological role, with S4 and S12 plays an important role in translational accuracy. Its function is as follows. Located at the back of the 30S subunit body where it stabilizes the conformation of the head with respect to the body. This chain is Small ribosomal subunit protein uS5, found in Gluconacetobacter diazotrophicus (strain ATCC 49037 / DSM 5601 / CCUG 37298 / CIP 103539 / LMG 7603 / PAl5).